Reading from the N-terminus, the 111-residue chain is Somatostatin-1B (111 aa).

The N-terminal stretch at 1–19 (MQLLSSLVSLLLVLYSVRA) is a signal peptide. A propeptide spanning residues 20-87 (AAVLPVEERN…RLEERAVYNR (68 aa)) is cleaved from the precursor. A disulfide bond links C100 and C111.

Belongs to the somatostatin family.

It localises to the secreted. In terms of biological role, somatostatin inhibits the release of somatotropin. This chain is Somatostatin-1B (sst1b), found in Carassius auratus (Goldfish).